A 174-amino-acid polypeptide reads, in one-letter code: Peptide methionine sulfoxide reductase MsrA (174 aa).

Cysteine 11 is a catalytic residue.

It belongs to the MsrA Met sulfoxide reductase family.

It catalyses the reaction L-methionyl-[protein] + [thioredoxin]-disulfide + H2O = L-methionyl-(S)-S-oxide-[protein] + [thioredoxin]-dithiol. The enzyme catalyses [thioredoxin]-disulfide + L-methionine + H2O = L-methionine (S)-S-oxide + [thioredoxin]-dithiol. Functionally, has an important function as a repair enzyme for proteins that have been inactivated by oxidation. Catalyzes the reversible oxidation-reduction of methionine sulfoxide in proteins to methionine. The protein is Peptide methionine sulfoxide reductase MsrA of Nitratiruptor sp. (strain SB155-2).